The chain runs to 816 residues: Lon protease (816 aa).

Residues Val40 to Leu244 enclose the Lon N-terminal domain. An ATP-binding site is contributed by Gly398–Thr405. The Lon proteolytic domain maps to Ala636–Phe816. Active-site residues include Ser724 and Lys767.

This sequence belongs to the peptidase S16 family. As to quaternary structure, homohexamer. Organized in a ring with a central cavity.

It localises to the cytoplasm. It carries out the reaction Hydrolysis of proteins in presence of ATP.. ATP-dependent serine protease that mediates the selective degradation of mutant and abnormal proteins as well as certain short-lived regulatory proteins. Required for cellular homeostasis and for survival from DNA damage and developmental changes induced by stress. Degrades polypeptides processively to yield small peptide fragments that are 5 to 10 amino acids long. Binds to DNA in a double-stranded, site-specific manner. This is Lon protease from Borrelia duttonii (strain Ly).